We begin with the raw amino-acid sequence, 344 residues long: tRNA N6-adenosine threonylcarbamoyltransferase (344 aa).

Positions 111 and 115 each coordinate Fe cation. Substrate contacts are provided by residues 133–137, D166, G179, and N283; that span reads LVSGG. D311 contributes to the Fe cation binding site.

The protein belongs to the KAE1 / TsaD family. The cofactor is Fe(2+).

The protein resides in the cytoplasm. It catalyses the reaction L-threonylcarbamoyladenylate + adenosine(37) in tRNA = N(6)-L-threonylcarbamoyladenosine(37) in tRNA + AMP + H(+). Its function is as follows. Required for the formation of a threonylcarbamoyl group on adenosine at position 37 (t(6)A37) in tRNAs that read codons beginning with adenine. Is involved in the transfer of the threonylcarbamoyl moiety of threonylcarbamoyl-AMP (TC-AMP) to the N6 group of A37, together with TsaE and TsaB. TsaD likely plays a direct catalytic role in this reaction. The protein is tRNA N6-adenosine threonylcarbamoyltransferase of Orientia tsutsugamushi (strain Ikeda) (Rickettsia tsutsugamushi).